The following is an 898-amino-acid chain: Metalloprotease StcE (898 aa).

A signal peptide spans 1–35 (MNTKMNERWRTPMKLKYLSCTILAPLAIGVFSATA). A Peptidase M66 domain is found at 296–551 (ELLLHTIDIG…QRFFENKAVF (256 aa)). Histidine 446 lines the Zn(2+) pocket. Glutamate 447 is an active-site residue. Zn(2+) contacts are provided by histidine 450 and histidine 456.

The cofactor is Zn(2+).

It is found in the secreted. Inhibited by divalent cation chelators such as BPS and EDTA. Functionally, virulence factor that contributes to intimate adherence of enterohemorrhagic E.coli (EHEC) O157:H7 to host cells. Is able to cleave the secreted human mucin 7 (MUC7) and the glycoprotein 340 (DMBT1/GP340). Also cleaves human C1 inhibitor (SERPING1), a regulator of multiple inflammatory pathways, and binds and localizes it to bacterial and host cell surfaces, protecting them from complement-mediated lysis. Therefore, the current model proposes two roles for StcE during infection: it acts first as a mucinase, allowing passage of EHEC through the oral cavity by cleaving the salivary glycoproteins that are responsible for bacterial aggregation. Similarly, in the colon, StcE cleaves the glycoproteins that protect the intestinal epithelial surface, allowing EHEC to come into close contact with host cell membranes. Secondly, it acts as an anti-inflammatory agent by localizing SERPING1 to cell membranes. This chain is Metalloprotease StcE (stcE), found in Escherichia coli O157:H7.